A 215-amino-acid chain; its full sequence is Transmembrane protein 267 (215 aa).

3 helical membrane passes run 77–97, 114–134, and 178–198; these read FCEV…HFFL, PLHC…LMQL, and YWLY…IMCL.

It localises to the membrane. This Xenopus laevis (African clawed frog) protein is Transmembrane protein 267 (tmem267).